A 354-amino-acid chain; its full sequence is Ferrochelatase (354 aa).

Fe cation is bound by residues H191 and E271.

Belongs to the ferrochelatase family.

Its subcellular location is the cytoplasm. The catalysed reaction is heme b + 2 H(+) = protoporphyrin IX + Fe(2+). It participates in porphyrin-containing compound metabolism; protoheme biosynthesis; protoheme from protoporphyrin-IX: step 1/1. Functionally, catalyzes the ferrous insertion into protoporphyrin IX. The polypeptide is Ferrochelatase (Rickettsia bellii (strain OSU 85-389)).